Reading from the N-terminus, the 500-residue chain is Galactofuranose transporter ATP-binding protein YtfR (500 aa).

ABC transporter domains lie at 10-245 and 259-497; these read LRTE…LGRE and LSDK…IMNA. ATP is bound at residue 42-49; the sequence is GENGAGKS.

Belongs to the ABC transporter superfamily. As to quaternary structure, the complex is composed of two ATP-binding proteins (YtfR), two transmembrane proteins (YtfT and YjfF) and a solute-binding protein (YtfQ).

The protein localises to the cell inner membrane. The enzyme catalyses D-galactofuranose(out) + ATP + H2O = D-galactofuranose(in) + ADP + phosphate + H(+). In terms of biological role, part of the ABC transporter complex YtfQRT-YjfF involved in galactofuranose transport. Responsible for energy coupling to the transport system. The sequence is that of Galactofuranose transporter ATP-binding protein YtfR (ytfR) from Escherichia coli O157:H7.